Consider the following 531-residue polypeptide: Transactivator/viroplasmin protein (531 aa).

Disordered regions lie at residues 80-101 and 505-531; these read ASGK…TATG and CKSE…SVLV. Polar residues-rich tracts occupy residues 91–100 and 505–517; these read SATSPEQTAT and CKSE…TSEE. Acidic residues predominate over residues 518–531; the sequence is GLQESEDEDFSVLV.

Belongs to the caulimoviridae viroplasmin family.

It localises to the host cytoplasm. Its function is as follows. Enhances the translation of downstream ORFs on polycistronic mRNAs. In Cestrum yellow leaf curling virus (CmYLCV), this protein is Transactivator/viroplasmin protein.